Consider the following 93-residue polypeptide: Small integral membrane protein 36 (93 aa).

The helical transmembrane segment at 14-34 (LIILVASYVILLLVFLISCVL) threads the bilayer. The disordered stretch occupies residues 73–93 (PKGPGLSLGDPAPLGKKSTMV).

Its subcellular location is the membrane. This is Small integral membrane protein 36 from Homo sapiens (Human).